Consider the following 460-residue polypeptide: Argininosuccinate lyase (460 aa).

It belongs to the lyase 1 family. Argininosuccinate lyase subfamily.

The protein resides in the cytoplasm. It carries out the reaction 2-(N(omega)-L-arginino)succinate = fumarate + L-arginine. It participates in amino-acid biosynthesis; L-arginine biosynthesis; L-arginine from L-ornithine and carbamoyl phosphate: step 3/3. This Prosthecochloris aestuarii (strain DSM 271 / SK 413) protein is Argininosuccinate lyase.